A 501-amino-acid chain; its full sequence is ATP synthase subunit alpha (501 aa).

An ATP-binding site is contributed by 169 to 176 (GDRQTGKT).

The protein belongs to the ATPase alpha/beta chains family. As to quaternary structure, F-type ATPases have 2 components, CF(1) - the catalytic core - and CF(0) - the membrane proton channel. CF(1) has five subunits: alpha(3), beta(3), gamma(1), delta(1), epsilon(1). CF(0) has three main subunits: a(1), b(2) and c(9-12). The alpha and beta chains form an alternating ring which encloses part of the gamma chain. CF(1) is attached to CF(0) by a central stalk formed by the gamma and epsilon chains, while a peripheral stalk is formed by the delta and b chains.

The protein localises to the cell membrane. The enzyme catalyses ATP + H2O + 4 H(+)(in) = ADP + phosphate + 5 H(+)(out). In terms of biological role, produces ATP from ADP in the presence of a proton gradient across the membrane. The alpha chain is a regulatory subunit. The protein is ATP synthase subunit alpha of Streptococcus pneumoniae serotype 2 (strain D39 / NCTC 7466).